Consider the following 1355-residue polypeptide: DNA-directed RNA polymerase subunit beta' (1355 aa).

Residues cysteine 219, cysteine 293, cysteine 300, and cysteine 303 each contribute to the Zn(2+) site. The interval 1331-1355 (AEVEVDDEVDDDYEDDDEDDDDYED) is disordered.

The protein belongs to the RNA polymerase beta' chain family. RpoC2 subfamily. In terms of assembly, in cyanobacteria the RNAP catalytic core is composed of 2 alpha, 1 beta, 1 beta', 1 gamma and 1 omega subunit. When a sigma factor is associated with the core the holoenzyme is formed, which can initiate transcription. Zn(2+) is required as a cofactor.

The enzyme catalyses RNA(n) + a ribonucleoside 5'-triphosphate = RNA(n+1) + diphosphate. DNA-dependent RNA polymerase catalyzes the transcription of DNA into RNA using the four ribonucleoside triphosphates as substrates. This Trichormus variabilis (strain ATCC 29413 / PCC 7937) (Anabaena variabilis) protein is DNA-directed RNA polymerase subunit beta'.